The sequence spans 705 residues: Dolichyl-diphosphooligosaccharide--protein glycosyltransferase subunit STT3A (705 aa).

Over 1-17 the chain is Cytoplasmic; sequence MTKLGFLRLSYEKQDTL. A helical transmembrane segment spans residues 18-38; sequence LKLLILSMAAVLSFSTRLFAV. The Lumenal segment spans residues 39–119; it reads LRFESVIHEF…IDIRNVCVFL (81 aa). The DXD motif 1 motif lies at 47–49; the sequence is EFD. Residue Asp-49 coordinates Mn(2+). Residues 120-138 form a helical membrane-spanning segment; the sequence is APLFSSFTTIVTYHLTKEL. The Cytoplasmic segment spans residues 139-140; that stretch reads KD. A helical membrane pass occupies residues 141-158; sequence AGAGLLAAAMIAVVPGYI. Residues 159-169 lie on the Lumenal side of the membrane; sequence SRSVAGSYDNE. Residues Asp-167 and Glu-169 each coordinate Mn(2+). The DXD motif 2 signature appears at 167-169; that stretch reads DNE. Residues 170–189 form a helical membrane-spanning segment; it reads GIAIFCMLLTYYMWIKAVKT. Residues 190 to 191 lie on the Cytoplasmic side of the membrane; that stretch reads GS. The helical transmembrane segment at 192–206 threads the bilayer; it reads IYWAAKCALAYFYMV. Residues 207–211 lie on the Lumenal side of the membrane; it reads SSWGG. A helical membrane pass occupies residues 212 to 228; the sequence is YVFLINLIPLHVLVLML. Topologically, residues 229-233 are cytoplasmic; the sequence is TGRFS. Residues 234 to 259 form a helical membrane-spanning segment; it reads HRIYVAYCTVYCLGTILSMQISFVGF. Residues 260 to 267 are Lumenal-facing; that stretch reads QPVLSSEH. A helical transmembrane segment spans residues 268-287; that stretch reads MAAFGVFGLCQIHAFVDYLR. The Cytoplasmic portion of the chain corresponds to 288–300; sequence SKLNPQQFEVLFR. A helical membrane pass occupies residues 301–321; it reads SVISLVGFVLLTIGALLMLTG. Residues 322–356 lie on the Lumenal side of the membrane; that stretch reads KISPWTGRFYSLLDPSYAKNNIPIIASVSEHQPTT. The short motif at 348-351 is the SVSE motif element; it reads SVSE. The helical transmembrane segment at 357-379 threads the bilayer; the sequence is WSSYYFDLQLLVFMFPVGLYYCF. The Cytoplasmic portion of the chain corresponds to 380 to 385; sequence SNLSDA. A helical membrane pass occupies residues 386–402; sequence RIFIIMYGVTSMYFSAV. The Lumenal portion of the chain corresponds to 403–406; that stretch reads MVRL. Position 405 (Arg-405) interacts with dolichyl diphosphooligosaccharide. Residues 407–428 form a helical membrane-spanning segment; it reads MLVLAPVMCILSGIGVSQVLST. Over 429 to 453 the chain is Cytoplasmic; the sequence is YMKNLDISRQDKKSKKQQDSTYPIK. The helical transmembrane segment at 454–473 threads the bilayer; sequence NEVASGMILVMAFFLITYTF. Topologically, residues 474 to 705 are lumenal; it reads HSTWVTSEAY…DLDNRGLSRT (232 aa). An interacts with target acceptor peptide in protein substrate region spans residues 525 to 527; sequence WWD. A WWDYG motif motif is present at residues 525–529; the sequence is WWDYG. Tyr-530 is a binding site for dolichyl diphosphooligosaccharide. N-linked (GlcNAc...) asparagine glycosylation is found at Asn-537 and Asn-544. Asn-548 carries an N-linked (GlcNAc...) (high mannose) asparagine glycan. The DK motif motif lies at 592–599; it reads DINKFLWM.

The protein belongs to the STT3 family. In terms of assembly, component of the oligosaccharyltransferase (OST) complex. There are 2 OST complexes, OST-A and OST-B, which contain STT3A or STT3B as catalytic subunit, respectively. OST-A and OST-B contain common core subunits RPN1, RPN2, OST48, OST4, DAD1 and TMEM258, and OST-A contains DC2/OSTC and KRTCAP2/KCP2 specific accessory subunits. OST-A complex assembly occurs through the formation of 3 subcomplexes. Subcomplex 1 contains RPN1 and TMEM258, subcomplex 2 contains the OST-A-specific subunits STT3A, DC2/OSTC, and KCP2 as well as the core subunit OST4, and subcomplex 3 contains RPN2, DAD1, and OST48. The OST-A complex can form stable complexes with the Sec61 complex or with both the Sec61 and TRAP complexes. Mg(2+) is required as a cofactor. The cofactor is Mn(2+).

The protein localises to the endoplasmic reticulum membrane. The catalysed reaction is a di-trans,poly-cis-dolichyl diphosphooligosaccharide + L-asparaginyl-[protein] = N(4)-(oligosaccharide-(1-&gt;4)-N-acetyl-beta-D-glucosaminyl-(1-&gt;4)-N-acetyl-beta-D-glucosaminyl)-L-asparaginyl-[protein] + a di-trans,poly-cis-dolichyl diphosphate + H(+). It participates in protein modification; protein glycosylation. Catalytic subunit of the oligosaccharyl transferase (OST) complex that catalyzes the initial transfer of a defined glycan (Glc(3)Man(9)GlcNAc(2) in eukaryotes) from the lipid carrier dolichol-pyrophosphate to an asparagine residue within an Asn-X-Ser/Thr consensus motif in nascent polypeptide chains, the first step in protein N-glycosylation. N-glycosylation occurs cotranslationally and the complex associates with the Sec61 complex at the channel-forming translocon complex that mediates protein translocation across the endoplasmic reticulum (ER). All subunits are required for a maximal enzyme activity. This subunit contains the active site and the acceptor peptide and donor lipid-linked oligosaccharide (LLO) binding pockets. STT3A is present in the majority of OST complexes and mediates cotranslational N-glycosylation of most sites on target proteins, while STT3B-containing complexes are required for efficient post-translational glycosylation and mediate glycosylation of sites that have been skipped by STT3A. STT3A-containing OST-A complex is also required to prevent hyperglycosylation of some target proteins by preventing glycosylation of facultative sites before folding of target proteins is completed. This Bos taurus (Bovine) protein is Dolichyl-diphosphooligosaccharide--protein glycosyltransferase subunit STT3A.